Reading from the N-terminus, the 1344-residue chain is Xanthine dehydrogenase (1344 aa).

Residues 9–96 (SVLVFFVNGK…GCAVTTVEGI (88 aa)) form the 2Fe-2S ferredoxin-type domain. [2Fe-2S] cluster contacts are provided by Cys-48, Cys-53, Cys-56, Cys-78, Cys-118, Cys-121, Cys-153, and Cys-155. Residues 236–425 (FSSERVTWYR…LGIHFQKTTP (190 aa)) form the FAD-binding PCMH-type domain. Residues 264–271 (LVVGNTEV), Phe-344, 354–358 (CLGGN), Asp-367, Leu-415, and Lys-433 contribute to the FAD site. The Mo-molybdopterin site is built by Gln-781 and Phe-812. Substrate contacts are provided by Glu-816 and Arg-894. Arg-926 provides a ligand contact to Mo-molybdopterin. Position 928 (Phe-928) interacts with substrate. Ala-1093 serves as a coordination point for Mo-molybdopterin. Glu-1276 (proton acceptor) is an active-site residue.

It belongs to the xanthine dehydrogenase family. Homodimer. It depends on FAD as a cofactor. The cofactor is Mo-molybdopterin. [2Fe-2S] cluster serves as cofactor.

Its subcellular location is the peroxisome. It carries out the reaction xanthine + NAD(+) + H2O = urate + NADH + H(+). The catalysed reaction is hypoxanthine + NAD(+) + H2O = xanthine + NADH + H(+). Its function is as follows. Key enzyme in purine degradation. Catalyzes the oxidation of hypoxanthine to xanthine. Catalyzes the oxidation of xanthine to uric acid. The polypeptide is Xanthine dehydrogenase (Xdh) (Drosophila subobscura (Fruit fly)).